Here is a 101-residue protein sequence, read N- to C-terminus: Protein SSXA1 (101 aa).

The region spanning 19 to 83 is the KRAB-related domain; it reads ETCQAFEDIS…ERVTKSVLSD (65 aa). The segment at 73-101 is disordered; it reads KERVTKSVLSDSDEVSSHESQDKRKNPVV. Over residues 87–101 the composition is skewed to basic and acidic residues; sequence VSSHESQDKRKNPVV.

Belongs to the SSX family. In terms of tissue distribution, specifically expressed in testis (at protein level). Not detected in other tissues tested (at protein level).

It localises to the nucleus. In terms of biological role, could act as a modulator of transcription. The sequence is that of Protein SSXA1 from Mus musculus (Mouse).